Reading from the N-terminus, the 256-residue chain is Vesicle-associated protein 1-1 (256 aa).

Position 1 is an N-acetylmethionine (Met-1). Residues 1-232 are Cytoplasmic-facing; the sequence is MSNIDLIGMS…RRESKKSQSG (232 aa). The residue at position 2 (Ser-2) is an N-acetylserine; in Vesicle-associated protein 1-1, N-terminally processed. The MSP domain occupies 22–142; sequence LLTVEPLDLQ…EETKLRVTYV (121 aa). A disordered region spans residues 142 to 169; it reads VAPPRPPSPVHEGSEEGSSPRASVSDNG. At Ser-149 the chain carries Phosphoserine. The segment covering 157–169 has biased composition (polar residues); it reads EGSSPRASVSDNG. The stretch at 187-232 forms a coiled coil; sequence HQENTSEARALITKLTEEKQSAIQLNNRLQRELDQLRRESKKSQSG. A helical; Anchor for type IV membrane protein transmembrane segment spans residues 233 to 253; it reads GIPFMYVLLVGLIGLILGYIM.

The protein belongs to the VAMP-associated protein (VAP) (TC 9.B.17) family. As to quaternary structure, homodimer or homooligomer. Interacts with the cowpea mosaic virus (CPMV) NTP-binding protein (NTB). Interacts with NET3C.

The protein localises to the endoplasmic reticulum membrane. Its subcellular location is the protein storage vacuole membrane. In terms of biological role, part of a membrane-cytoskeletal adapter complex that forms a bridge between the endoplasmic reticulum and the plasma membrane. Associates with microtubules. The chain is Vesicle-associated protein 1-1 (PVA11) from Arabidopsis thaliana (Mouse-ear cress).